A 202-amino-acid chain; its full sequence is uncharacterized protein (202 aa).

Belongs to the dienelactone hydrolase family.

This is an uncharacterized protein from Bacillus subtilis (strain 168).